Reading from the N-terminus, the 547-residue chain is uncharacterized protein (547 aa).

Positions M1–S18 are enriched in polar residues. 2 disordered regions span residues M1–P41 and P80–Q165. Composition is skewed to low complexity over residues Q19 to Q29 and P83 to Y94. A compositionally biased stretch (pro residues) spans V121–P135. Polar residues predominate over residues K136–G160. The zn(2)-C6 fungal-type DNA-binding region spans C174–C201.

The protein localises to the nucleus. This is an uncharacterized protein from Schizosaccharomyces pombe (strain 972 / ATCC 24843) (Fission yeast).